The following is a 478-amino-acid chain: Putative malate transporter YflS (478 aa).

The next 12 membrane-spanning stretches (helical) occupy residues alanine 12 to isoleucine 31, alanine 41 to serine 57, alanine 64 to isoleucine 81, isoleucine 96 to valine 118, glycine 187 to alanine 209, tryptophan 222 to isoleucine 244, leucine 277 to phenylalanine 296, alanine 300 to tryptophan 319, leucine 332 to phenylalanine 354, glycine 364 to alanine 386, alanine 398 to isoleucine 420, and tryptophan 450 to tryptophan 472.

This sequence belongs to the SLC13A/DASS transporter (TC 2.A.47) family. DIT1 subfamily.

It is found in the cell membrane. Functionally, might be a malate transporter. The protein is Putative malate transporter YflS (yflS) of Bacillus subtilis (strain 168).